We begin with the raw amino-acid sequence, 305 residues long: Superkiller complex protein 8 (305 aa).

WD repeat units lie at residues 14–57 (AHED…LEMQ), 62–101 (GHQL…QIRS), 104–143 (AGPV…KEYS), 146–187 (TRGK…HTLE), 188–227 (GHAM…LAAT), 230–269 (GHGS…CVHT), and 272–305 (DHQD…DCPI).

Belongs to the SKI8 family. Component of the PAF1 complex. Component of the SKI complex.

It is found in the nucleus. Its subcellular location is the cytoplasm. Functionally, component of the PAF1 complex (PAF1C) which has multiple functions during transcription by RNA polymerase II and is implicated in regulation of development and maintenance of embryonic stem cell pluripotency. PAF1C associates with RNA polymerase II through interaction with POLR2A CTD non-phosphorylated and 'Ser-2'- and 'Ser-5'-phosphorylated forms and is involved in transcriptional elongation, acting both independently and synergistically with TCEA1 and in cooperation with the DSIF complex and HTATSF1. Also acts as a component of the SKI complex, a multiprotein complex that assists the RNA-degrading exosome during the mRNA decay and quality-control pathways. The SKI complex catalyzes mRNA extraction from 80S ribosomal complexes in the 3'-5' direction and channels mRNA to the cytosolic exosome for degradation. In Xenopus laevis (African clawed frog), this protein is Superkiller complex protein 8 (skic8).